The following is a 292-amino-acid chain: uncharacterized protein (292 aa).

2 disordered regions span residues 29–50 (SEKP…LRDS) and 166–292 (VKRK…EELK). A Phosphoserine modification is found at Ser50. Composition is skewed to polar residues over residues 176 to 189 (NSKN…PVNN) and 208 to 217 (GSPTNFSKLI). Over residues 221–239 (YKDEWLQQQKADSDRRTPK) the composition is skewed to basic and acidic residues. Composition is skewed to polar residues over residues 240–250 (TSEASVSTQST) and 260–270 (DTETPQNSETP).

Post-translationally, phosphorylated upon DNA damage.

This is an uncharacterized protein from Rattus norvegicus (Rat).